Here is a 573-residue protein sequence, read N- to C-terminus: Urease subunit alpha (573 aa).

3 residues coordinate Ni(2+): His139, His141, and Lys222. Lys222 carries the N6-carboxylysine modification. Position 224 (His224) interacts with substrate. Residues His251 and His277 each contribute to the Ni(2+) site. His325 (proton donor) is an active-site residue. Residue Asp365 coordinates Ni(2+).

Belongs to the metallo-dependent hydrolases superfamily. Urease alpha subunit family. As to quaternary structure, heterotrimer of UreA (gamma), UreB (beta) and UreC (alpha) subunits. Three heterotrimers associate to form the active enzyme. Ni cation serves as cofactor. Post-translationally, carboxylation allows a single lysine to coordinate two nickel ions.

Its subcellular location is the cytoplasm. The enzyme catalyses urea + 2 H2O + H(+) = hydrogencarbonate + 2 NH4(+). The protein operates within nitrogen metabolism; urea degradation; CO(2) and NH(3) from urea (urease route): step 1/1. The sequence is that of Urease subunit alpha from Flavobacterium johnsoniae (strain ATCC 17061 / DSM 2064 / JCM 8514 / BCRC 14874 / CCUG 350202 / NBRC 14942 / NCIMB 11054 / UW101) (Cytophaga johnsonae).